Reading from the N-terminus, the 428-residue chain is Serine--tRNA ligase (428 aa).

231–233 (TAE) contacts L-serine. Residue 262 to 264 (RSE) participates in ATP binding. E285 contributes to the L-serine binding site. 349–352 (EISS) lines the ATP pocket. S385 contributes to the L-serine binding site.

It belongs to the class-II aminoacyl-tRNA synthetase family. Type-1 seryl-tRNA synthetase subfamily. As to quaternary structure, homodimer. The tRNA molecule binds across the dimer.

The protein resides in the cytoplasm. The enzyme catalyses tRNA(Ser) + L-serine + ATP = L-seryl-tRNA(Ser) + AMP + diphosphate + H(+). It catalyses the reaction tRNA(Sec) + L-serine + ATP = L-seryl-tRNA(Sec) + AMP + diphosphate + H(+). The protein operates within aminoacyl-tRNA biosynthesis; selenocysteinyl-tRNA(Sec) biosynthesis; L-seryl-tRNA(Sec) from L-serine and tRNA(Sec): step 1/1. Its function is as follows. Catalyzes the attachment of serine to tRNA(Ser). Is also able to aminoacylate tRNA(Sec) with serine, to form the misacylated tRNA L-seryl-tRNA(Sec), which will be further converted into selenocysteinyl-tRNA(Sec). The chain is Serine--tRNA ligase from Staphylococcus aureus (strain MRSA252).